A 104-amino-acid polypeptide reads, in one-letter code: UPF0235 protein M446_3939 (104 aa).

The protein belongs to the UPF0235 family.

This chain is UPF0235 protein M446_3939, found in Methylobacterium sp. (strain 4-46).